A 185-amino-acid chain; its full sequence is Large ribosomal subunit protein uL22 (185 aa).

Residues 157 to 185 (VAAPTPDEDAPKKKQSKKKMARQKLMQRD) are disordered. The segment covering 169-178 (KKQSKKKMAR) has biased composition (basic residues).

This sequence belongs to the universal ribosomal protein uL22 family.

The sequence is that of Large ribosomal subunit protein uL22 (RpL17) from Argas monolakensis (Mono lake bird tick).